The following is a 404-amino-acid chain: Nicotinate phosphoribosyltransferase (404 aa).

Histidine 225 is subject to Phosphohistidine; by autocatalysis.

The protein belongs to the NAPRTase family. In terms of processing, transiently phosphorylated on a His residue during the reaction cycle. Phosphorylation strongly increases the affinity for substrates and increases the rate of nicotinate D-ribonucleotide production. Dephosphorylation regenerates the low-affinity form of the enzyme, leading to product release.

It catalyses the reaction nicotinate + 5-phospho-alpha-D-ribose 1-diphosphate + ATP + H2O = nicotinate beta-D-ribonucleotide + ADP + phosphate + diphosphate. It functions in the pathway cofactor biosynthesis; NAD(+) biosynthesis; nicotinate D-ribonucleotide from nicotinate: step 1/1. Catalyzes the synthesis of beta-nicotinate D-ribonucleotide from nicotinate and 5-phospho-D-ribose 1-phosphate at the expense of ATP. The chain is Nicotinate phosphoribosyltransferase from Acinetobacter baumannii (strain ATCC 17978 / DSM 105126 / CIP 53.77 / LMG 1025 / NCDC KC755 / 5377).